Reading from the N-terminus, the 261-residue chain is MMIPAIDLIGGEVVRLYQGDYAQKTNYQYTVQDRQQAYAESGATVMHFVDLDGAKDSTKRQLKTLKTVVNHPSMIIQVGGGVRCEDDVKQLLALGADRVVIGSLAIKQPELVTQWVKTYGCEKIVLALDIKIDAQGNKTLPTHGWIEDSGVNLEDLLAQYQDAGIKHVLCTDISKDGTLTGTNVDLYSEVCAKYPDIDWQASGGIGSLADIKALIPTGVSGVILGRSLLEGKFTLEEAIACWPKTSANNAESNTSSNTGDK.

Catalysis depends on aspartate 7, which acts as the Proton acceptor. Catalysis depends on aspartate 129, which acts as the Proton donor.

It belongs to the HisA/HisF family.

Its subcellular location is the cytoplasm. The catalysed reaction is 1-(5-phospho-beta-D-ribosyl)-5-[(5-phospho-beta-D-ribosylamino)methylideneamino]imidazole-4-carboxamide = 5-[(5-phospho-1-deoxy-D-ribulos-1-ylimino)methylamino]-1-(5-phospho-beta-D-ribosyl)imidazole-4-carboxamide. The protein operates within amino-acid biosynthesis; L-histidine biosynthesis; L-histidine from 5-phospho-alpha-D-ribose 1-diphosphate: step 4/9. In Colwellia psychrerythraea (strain 34H / ATCC BAA-681) (Vibrio psychroerythus), this protein is 1-(5-phosphoribosyl)-5-[(5-phosphoribosylamino)methylideneamino] imidazole-4-carboxamide isomerase.